The primary structure comprises 184 residues: Large ribosomal subunit protein uL22 (184 aa).

The segment at 160 to 184 is disordered; it reads PEEEVAQKKKISQKKLKKQKLMARE. A compositionally biased stretch (basic residues) spans 167-184; that stretch reads KKKISQKKLKKQKLMARE.

The protein belongs to the universal ribosomal protein uL22 family. Component of the large ribosomal subunit. In terms of tissue distribution, expressed in pancreas, lung, colon, cystic duct, gall bladder, kidney and liver. Expressed at high levels in the well differentiated pancreatic tumor cell lines HPAF, COLO 357 and Capan-1, the moderately differentiated pancreatic tumor cell lines T3M-4, AsPc-1 and BxPc-3, the poorly differentiated pancreatic tumor cell line MIA PaCa-2, and the pancreatic tumor cell lines of undefined differentiation status such as SW979. Expressed at lower levels in the poorly differentiated pancreatic tumor cell lines HCG-25 and PANC-1.

It is found in the cytoplasm. Functionally, component of the large ribosomal subunit. The ribosome is a large ribonucleoprotein complex responsible for the synthesis of proteins in the cell. In Homo sapiens (Human), this protein is Large ribosomal subunit protein uL22 (RPL17).